A 200-amino-acid chain; its full sequence is Ribonuclease HII (200 aa).

One can recognise an RNase H type-2 domain in the interval 14-200 (SRLAGVDEVG…FAPVKQWQLL (187 aa)). The a divalent metal cation site is built by Asp20, Glu21, and Asp112.

Belongs to the RNase HII family. Requires Mn(2+) as cofactor. The cofactor is Mg(2+).

It localises to the cytoplasm. It carries out the reaction Endonucleolytic cleavage to 5'-phosphomonoester.. Endonuclease that specifically degrades the RNA of RNA-DNA hybrids. This Chromohalobacter salexigens (strain ATCC BAA-138 / DSM 3043 / CIP 106854 / NCIMB 13768 / 1H11) protein is Ribonuclease HII.